The chain runs to 301 residues: MSEDIRRGPGRPPKKRVVPNFERKGILEKPVRPQSRLEFSYDNPLIFKNLFIYFKNLKSKNILVRCTPTEITFFSRDQSQASFVIATIDGKNVNHYYASDVFWLGINRELVEKMFNSIDRSFLKITIVHRYDKPETLYFIFTDFDIDKECTYQITVSEPELDMDLIEMEKSISEERLKNYPLRWEFTSKQLKKTFSDLSNYTELVTIEKLGGDTPLHLYFQKFNSISYHEMYKSSNKINLTSTIPKSQVFQINVKIAHIKSLASAMVTDKIRILCEENGNLIFQSEMDALMLNTITMNNMI.

This sequence belongs to the asfivirus E301R family. In terms of assembly, interacts with host IRF3.

Functionally, plays a role in the inhibition of host innate immune system by acting as a negatively regulator of type I interferon production. Mechanistically, interacts with and prevents host IRF3 nuclear localization to inhibit its transcriptional activity. This is an uncharacterized protein from Ornithodoros (relapsing fever ticks).